The primary structure comprises 200 residues: Dephospho-CoA kinase (200 aa).

The region spanning 6 to 200 (AIALSGGIAT…KIKAKYLEKK (195 aa)) is the DPCK domain. 14 to 19 (ATGKST) provides a ligand contact to ATP.

The protein belongs to the CoaE family.

It localises to the cytoplasm. The catalysed reaction is 3'-dephospho-CoA + ATP = ADP + CoA + H(+). Its pathway is cofactor biosynthesis; coenzyme A biosynthesis; CoA from (R)-pantothenate: step 5/5. Its function is as follows. Catalyzes the phosphorylation of the 3'-hydroxyl group of dephosphocoenzyme A to form coenzyme A. The polypeptide is Dephospho-CoA kinase (Sulfurimonas denitrificans (strain ATCC 33889 / DSM 1251) (Thiomicrospira denitrificans (strain ATCC 33889 / DSM 1251))).